We begin with the raw amino-acid sequence, 102 residues long: Crustacean hyperglycemic hormones 3 (102 aa).

The N-terminal stretch at 1-22 (MIALRLIAVTLVVAMAASTTWA) is a signal peptide. 3 disulfides stabilise this stretch: Cys35/Cys71, Cys51/Cys67, and Cys54/Cys80. Val100 is modified (valine amide).

This sequence belongs to the arthropod CHH/MIH/GIH/VIH hormone family.

Its subcellular location is the secreted. Functionally, hormone found in the sinus gland of isopods and decapods which controls the blood sugar level. Has a secretagogue action over the amylase released from the midgut gland. May act as a stress hormone and may be involved in the control of molting and reproduction. The protein is Crustacean hyperglycemic hormones 3 (CHH3) of Penaeus monodon (Giant tiger prawn).